Here is a 270-residue protein sequence, read N- to C-terminus: NADPH-dependent 7-cyano-7-deazaguanine reductase (270 aa).

79–81 (IES) serves as a coordination point for substrate. 81–82 (SK) serves as a coordination point for NADPH. The active-site Thioimide intermediate is the C177. Residue D184 is the Proton donor of the active site. Position 216–217 (216–217 (HE)) interacts with substrate. 245–246 (RG) lines the NADPH pocket.

This sequence belongs to the GTP cyclohydrolase I family. QueF type 2 subfamily. As to quaternary structure, homodimer.

The protein localises to the cytoplasm. The catalysed reaction is 7-aminomethyl-7-carbaguanine + 2 NADP(+) = 7-cyano-7-deazaguanine + 2 NADPH + 3 H(+). It participates in tRNA modification; tRNA-queuosine biosynthesis. Catalyzes the NADPH-dependent reduction of 7-cyano-7-deazaguanine (preQ0) to 7-aminomethyl-7-deazaguanine (preQ1). This is NADPH-dependent 7-cyano-7-deazaguanine reductase from Acinetobacter baumannii (strain AB307-0294).